The following is a 63-amino-acid chain: MARRCEICDKGVVAGVSYSHSHRQSKRTWAPNIKKVKALVNGTPKTVHVCTRCLRSGKVQRAI.

Belongs to the bacterial ribosomal protein bL28 family.

In Clostridium beijerinckii (strain ATCC 51743 / NCIMB 8052) (Clostridium acetobutylicum), this protein is Large ribosomal subunit protein bL28.